Consider the following 200-residue polypeptide: Holliday junction branch migration complex subunit RuvA (200 aa).

The segment at 1–64 is domain I; it reads MIGQLTGLVG…EDAIQLFGFA (64 aa). Positions 65 to 143 are domain II; that stretch reads TTDERDWFRL…KMPGGGGTVS (79 aa). Positions 144-148 are flexible linker; it reads APGIV. The tract at residues 149–200 is domain III; the sequence is SGPSVENDALLALAGLGFRRAEAWPVLSKVLAENENATLDLAIRLSLKDLAR.

This sequence belongs to the RuvA family. Homotetramer. Forms an RuvA(8)-RuvB(12)-Holliday junction (HJ) complex. HJ DNA is sandwiched between 2 RuvA tetramers; dsDNA enters through RuvA and exits via RuvB. An RuvB hexamer assembles on each DNA strand where it exits the tetramer. Each RuvB hexamer is contacted by two RuvA subunits (via domain III) on 2 adjacent RuvB subunits; this complex drives branch migration. In the full resolvosome a probable DNA-RuvA(4)-RuvB(12)-RuvC(2) complex forms which resolves the HJ.

The protein localises to the cytoplasm. In terms of biological role, the RuvA-RuvB-RuvC complex processes Holliday junction (HJ) DNA during genetic recombination and DNA repair, while the RuvA-RuvB complex plays an important role in the rescue of blocked DNA replication forks via replication fork reversal (RFR). RuvA specifically binds to HJ cruciform DNA, conferring on it an open structure. The RuvB hexamer acts as an ATP-dependent pump, pulling dsDNA into and through the RuvAB complex. HJ branch migration allows RuvC to scan DNA until it finds its consensus sequence, where it cleaves and resolves the cruciform DNA. This Gluconobacter oxydans (strain 621H) (Gluconobacter suboxydans) protein is Holliday junction branch migration complex subunit RuvA.